The primary structure comprises 116 residues: UPF0499 protein ATEG_06693 (116 aa).

Residues 1 to 18 (MKLTGLLSLALLTTLALA) form the signal peptide. Cystine bridges form between Cys-32–Cys-46, Cys-36–Cys-49, and Cys-42–Cys-54.

It belongs to the UPF0499 family.

The protein resides in the secreted. This Aspergillus terreus (strain NIH 2624 / FGSC A1156) protein is UPF0499 protein ATEG_06693.